The chain runs to 114 residues: U17-barytoxin-Tl1d (114 aa).

The signal sequence occupies residues 1 to 20 (MKTIIVFLSLLVLATKFGDA). A propeptide spanning residues 21–74 (NEGVNQEQMKEVIQNEFREDFLNEMAAMSLLQQLEAIESTLLEKEADRNSRQKR) is cleaved from the precursor. Intrachain disulfides connect C75–C88, C82–C93, and C87–C108.

The protein belongs to the neurotoxin 14 (magi-1) family. 03 (ICK-30-40) subfamily. As to expression, expressed by the venom gland.

Its subcellular location is the secreted. Functionally, ion channel inhibitor. This chain is U17-barytoxin-Tl1d, found in Trittame loki (Brush-footed trapdoor spider).